The following is a 474-amino-acid chain: tRNA-2-methylthio-N(6)-dimethylallyladenosine synthase (474 aa).

The 118-residue stretch at 3 to 120 (KKLHIKTWGC…LPDMIEQVRR (118 aa)) folds into the MTTase N-terminal domain. [4Fe-4S] cluster contacts are provided by Cys-12, Cys-49, Cys-83, Cys-157, Cys-161, and Cys-164. The Radical SAM core domain occupies 143–375 (RAEGPTAFVS…QDRITQQAMR (233 aa)). One can recognise a TRAM domain in the interval 378–441 (RHMMGTVQRI…TNSLRGKFIR (64 aa)).

The protein belongs to the methylthiotransferase family. MiaB subfamily. Monomer. It depends on [4Fe-4S] cluster as a cofactor.

The protein resides in the cytoplasm. It catalyses the reaction N(6)-dimethylallyladenosine(37) in tRNA + (sulfur carrier)-SH + AH2 + 2 S-adenosyl-L-methionine = 2-methylsulfanyl-N(6)-dimethylallyladenosine(37) in tRNA + (sulfur carrier)-H + 5'-deoxyadenosine + L-methionine + A + S-adenosyl-L-homocysteine + 2 H(+). Its function is as follows. Catalyzes the methylthiolation of N6-(dimethylallyl)adenosine (i(6)A), leading to the formation of 2-methylthio-N6-(dimethylallyl)adenosine (ms(2)i(6)A) at position 37 in tRNAs that read codons beginning with uridine. The protein is tRNA-2-methylthio-N(6)-dimethylallyladenosine synthase of Shewanella sp. (strain MR-7).